Consider the following 490-residue polypeptide: B3 domain-containing protein LOC_Os12g40080 (490 aa).

The TF-B3 1 DNA-binding region spans 24 to 117; the sequence is GKSFIKVMIT…HFKVWIYDPS (94 aa). The segment at 161-191 is disordered; the sequence is SGHSKETSEINPANSPSWKPTERVPSSEELD. Residues 169–178 are compositionally biased toward polar residues; sequence EINPANSPSW. 2 consecutive DNA-binding regions (TF-B3) follow at residues 236 to 331 and 389 to 487; these read FYIT…FHPL and VAVM…IRKS.

The protein resides in the nucleus. This chain is B3 domain-containing protein LOC_Os12g40080, found in Oryza sativa subsp. japonica (Rice).